The chain runs to 234 residues: NLP effector protein Pc576423 (234 aa).

The N-terminal stretch at 1–18 (MNLRAIAVTFATFAGANA) is a signal peptide. Residues N35 and N66 are each glycosylated (N-linked (GlcNAc...) asparagine). The short motif at 119–125 (GHRHDWE) is the Hepta-peptide GHRHDWE motif element.

The protein belongs to the Necrosis inducing protein (NPP1) family.

It is found in the secreted. Its function is as follows. Secreted effector that contributes strongly to virulence during infection by P.capsici. The chain is NLP effector protein Pc576423 from Phytophthora capsici.